Consider the following 860-residue polypeptide: Valine--tRNA ligase (860 aa).

The 'HIGH' region signature appears at 53 to 63 (PNLTGILHIGH). A 'KMSKS' region motif is present at residues 527–531 (KMSKS). Lysine 530 contacts ATP. Residues 794–860 (QDKTKIVDKL…LKQDKLNSLK (67 aa)) adopt a coiled-coil conformation.

The protein belongs to the class-I aminoacyl-tRNA synthetase family. ValS type 1 subfamily. Monomer.

The protein resides in the cytoplasm. It catalyses the reaction tRNA(Val) + L-valine + ATP = L-valyl-tRNA(Val) + AMP + diphosphate. Functionally, catalyzes the attachment of valine to tRNA(Val). As ValRS can inadvertently accommodate and process structurally similar amino acids such as threonine, to avoid such errors, it has a 'posttransfer' editing activity that hydrolyzes mischarged Thr-tRNA(Val) in a tRNA-dependent manner. This Mycoplasmoides gallisepticum (strain R(low / passage 15 / clone 2)) (Mycoplasma gallisepticum) protein is Valine--tRNA ligase.